The following is a 140-amino-acid chain: uncharacterized protein (140 aa).

The protein localises to the mitochondrion. This is an uncharacterized protein from Homo sapiens (Human).